The primary structure comprises 71 residues: Exodeoxyribonuclease 7 small subunit (71 aa).

Belongs to the XseB family. Heterooligomer composed of large and small subunits.

The protein localises to the cytoplasm. The catalysed reaction is Exonucleolytic cleavage in either 5'- to 3'- or 3'- to 5'-direction to yield nucleoside 5'-phosphates.. Functionally, bidirectionally degrades single-stranded DNA into large acid-insoluble oligonucleotides, which are then degraded further into small acid-soluble oligonucleotides. The protein is Exodeoxyribonuclease 7 small subunit of Clostridium botulinum (strain Loch Maree / Type A3).